A 429-amino-acid chain; its full sequence is Ribosomal RNA small subunit methyltransferase B (429 aa).

Residues 254–260 (CAAPGGK), Asp277, Asp303, and Asp322 each bind S-adenosyl-L-methionine. The active-site Nucleophile is the Cys375.

Belongs to the class I-like SAM-binding methyltransferase superfamily. RsmB/NOP family.

Its subcellular location is the cytoplasm. It carries out the reaction cytidine(967) in 16S rRNA + S-adenosyl-L-methionine = 5-methylcytidine(967) in 16S rRNA + S-adenosyl-L-homocysteine + H(+). Functionally, specifically methylates the cytosine at position 967 (m5C967) of 16S rRNA. The sequence is that of Ribosomal RNA small subunit methyltransferase B from Yersinia enterocolitica serotype O:8 / biotype 1B (strain NCTC 13174 / 8081).